We begin with the raw amino-acid sequence, 196 residues long: Peptidyl-tRNA hydrolase (196 aa).

Tyr-18 serves as a coordination point for tRNA. The active-site Proton acceptor is the His-23. TRNA is bound by residues Phe-69, Asn-71, and Asn-117.

The protein belongs to the PTH family. Monomer.

Its subcellular location is the cytoplasm. The enzyme catalyses an N-acyl-L-alpha-aminoacyl-tRNA + H2O = an N-acyl-L-amino acid + a tRNA + H(+). Hydrolyzes ribosome-free peptidyl-tRNAs (with 1 or more amino acids incorporated), which drop off the ribosome during protein synthesis, or as a result of ribosome stalling. In terms of biological role, catalyzes the release of premature peptidyl moieties from peptidyl-tRNA molecules trapped in stalled 50S ribosomal subunits, and thus maintains levels of free tRNAs and 50S ribosomes. The sequence is that of Peptidyl-tRNA hydrolase from Vibrio vulnificus (strain CMCP6).